The sequence spans 318 residues: NADH-ubiquinone oxidoreductase chain 1 (318 aa).

8 helical membrane passes run 2-22 (FMINLFLLIIPILLAMAFLTL), 76-96 (TLALTIALVTWIPLPLPYPLI), 102-122 (LLFILATSSLAVYSILWSGWA), 146-166 (LAIILLSLLLMNGSFTLSTLI), 171-191 (YLWLIIPSWPLAMMWFISTLA), 217-237 (AGPFALFFMAEYTNIIMMNAL), 253-273 (ETYTTSFAIKTLLLTILFLWV), and 294-314 (LPLTLALCMWYVSLPVLASCI).

It belongs to the complex I subunit 1 family. As to quaternary structure, core subunit of respiratory chain NADH dehydrogenase (Complex I) which is composed of 45 different subunits.

It localises to the mitochondrion inner membrane. The catalysed reaction is a ubiquinone + NADH + 5 H(+)(in) = a ubiquinol + NAD(+) + 4 H(+)(out). In terms of biological role, core subunit of the mitochondrial membrane respiratory chain NADH dehydrogenase (Complex I) which catalyzes electron transfer from NADH through the respiratory chain, using ubiquinone as an electron acceptor. Essential for the catalytic activity and assembly of complex I. In Lemur catta (Ring-tailed lemur), this protein is NADH-ubiquinone oxidoreductase chain 1 (MT-ND1).